The following is a 307-amino-acid chain: Elongation factor Ts (307 aa).

An involved in Mg(2+) ion dislocation from EF-Tu region spans residues 79–82 (TDFV).

Belongs to the EF-Ts family.

It localises to the cytoplasm. Functionally, associates with the EF-Tu.GDP complex and induces the exchange of GDP to GTP. It remains bound to the aminoacyl-tRNA.EF-Tu.GTP complex up to the GTP hydrolysis stage on the ribosome. This chain is Elongation factor Ts, found in Bartonella tribocorum (strain CIP 105476 / IBS 506).